Consider the following 2677-residue polypeptide: Probable helicase senataxin (2677 aa).

Residue Lys339 forms a Glycyl lysine isopeptide (Lys-Gly) (interchain with G-Cter in SUMO1) linkage. 3 positions are modified to phosphoserine: Ser615, Ser642, and Ser878. Lys894 participates in a covalent cross-link: Glycyl lysine isopeptide (Lys-Gly) (interchain with G-Cter in SUMO2). A phosphoserine mark is found at Ser911, Ser947, Ser956, Ser1017, and Ser1019. Glycyl lysine isopeptide (Lys-Gly) (interchain with G-Cter in SUMO2) cross-links involve residues Lys1056 and Lys1063. Disordered stretches follow at residues 1158–1219 and 1237–1258; these read KKPK…TTVS and PVSKTPKKTHSDAKKGQNRSSN. Polar residues predominate over residues 1176-1187; the sequence is PSSSVRNEGQSD. The segment covering 1188-1205 has biased composition (basic and acidic residues); sequence TNKRDLVGNDFKSIDRRT. The segment covering 1206 to 1219 has biased composition (polar residues); sequence STPNSRIQRATTVS. The residue at position 1330 (Ser1330) is a Phosphoserine. Residues Lys1340 and Lys1341 each participate in a glycyl lysine isopeptide (Lys-Gly) (interchain with G-Cter in SUMO2) cross-link. The tract at residues 1351–1385 is disordered; it reads QRQIRPKSQKNRRRLSDCESTDVKRAGSHTAQNSD. A compositionally biased stretch (basic residues) spans 1354 to 1363; the sequence is IRPKSQKNRR. The span at 1364-1375 shows a compositional bias: basic and acidic residues; that stretch reads RLSDCESTDVKR. Residue Ser1366 is modified to Phosphoserine. Residue Lys1415 forms a Glycyl lysine isopeptide (Lys-Gly) (interchain with G-Cter in SUMO2) linkage. At Ser1489 the chain carries Phosphoserine. The segment at 1579–1604 is disordered; that stretch reads FRKPGLPPPASKPLRPTTKIFSSKST. A phosphoserine mark is found at Ser1621, Ser1623, and Ser1663. 1963–1970 contributes to the ATP binding site; it reads GPPGTGKS. Positions 2070–2087 match the Bipartite nuclear localization signal motif; the sequence is KKELPSHVQAMHKRKEFL. Residues 2105 to 2136 are a coiled coil; the sequence is REIQRQELDENISKVSKERQELASKIKEVQGR. Residue Thr2474 is modified to Phosphothreonine. 3 disordered regions span residues 2474 to 2496, 2556 to 2577, and 2597 to 2677; these read THPPTIAPEGSRPQGGLPSSKLD, WDPQPSSPQHPGATPPTGEPGF, and LSSH…RKLL. Residues 2560–2573 are compositionally biased toward pro residues; it reads PSSPQHPGATPPTG. The segment covering 2628–2671 has biased composition (basic and acidic residues); it reads ELCHRREARAFSEGEQEKCGSETHHTRRNSRWDKRTLEQEDSSS. A necessary for nuclear localization region spans residues 2661–2677; it reads KRTLEQEDSSSKKRKLL.

It belongs to the DNA2/NAM7 helicase family. Homodimer. Interacts with PER2; the interaction inhibits termination of circadian target genes. Interacts with CHD4, POLR2A, PRKDC and TRIM28. Interacts with UBE2I. Interacts (via N-terminus domain) with EXOSC9 (via C-terminus region); the interaction enhances SETX sumoylation. Interacts with NCL (via N-terminus domain). Interacts with PABPN1, PABPC1 and SF3B1. Interacts with SMN1/SMN2 and POLR2A; SMN1/SMN2 recruits SETX to POLR2A. Post-translationally, ubiquitinated. Sumoylated preferentially with SUMO2 or SUMO3. As to expression, highly expressed in skeletal muscle. Expressed in heart, fibroblast, placenta and liver. Weakly expressed in brain and lung. Expressed in the cortex of the kidney (highly expressed in tubular epithelial cells but low expression in the glomerulus).

The protein localises to the nucleus. It localises to the nucleoplasm. The protein resides in the nucleolus. Its subcellular location is the cytoplasm. It is found in the chromosome. The protein localises to the telomere. It localises to the cell projection. The protein resides in the axon. Its subcellular location is the growth cone. In terms of biological role, probable RNA/DNA helicase involved in diverse aspects of RNA metabolism and genomic integrity. Plays a role in transcription regulation by its ability to modulate RNA Polymerase II (Pol II) binding to chromatin and through its interaction with proteins involved in transcription. Contributes to the mRNA splicing efficiency and splice site selection. Required for the resolution of R-loop RNA-DNA hybrid formation at G-rich pause sites located downstream of the poly(A) site, allowing XRN2 recruitment and XRN2-mediated degradation of the downstream cleaved RNA and hence efficient RNA polymerase II (RNAp II) transcription termination. Required for the 3' transcriptional termination of PER1 and CRY2, thus playing an important role in the circadian rhythm regulation. Involved in DNA double-strand breaks damage response generated by oxidative stress. In association with RRP45, targets the RNA exosome complex to sites of transcription-induced DNA damage. Plays a role in the development and maturation of germ cells: essential for male meiosis, acting at the interface of transcription and meiotic recombination, and in the process of gene silencing during meiotic sex chromosome inactivation (MSCI). May be involved in telomeric stability through the regulation of telomere repeat-containing RNA (TERRA) transcription. Plays a role in neurite outgrowth in hippocampal cells through FGF8-activated signaling pathways. Inhibits retinoic acid-induced apoptosis. In Homo sapiens (Human), this protein is Probable helicase senataxin.